Consider the following 332-residue polypeptide: MTAIKHPVLLWGLPVAALIIIFWLSLFCYSAIPVSGADATRALLPGHTPTLPEALVQNLRLPRSLVAVLIGASLALAGTLLQTLTHNPMASPSLLGINSGAALAMALTSALSPTPIAGYSLSFIAACGGGVSWLLVMTAGGGFRHTHDRNKLILAGIALSAFCMGLTRITLLLAEDHAYGIFYWLAGGVSHARWQDVWQLLPVVVTAVPVVLLLANQLNLLNLSDSTAHTLGVNLTRLRLVINMLVLLLVGACVSVAGPVAFIGLLVPHLARFWAGFDQRNVLPVSMLLGATLMLLADVLARALAFPGDLPAGAVLALIGSPCFVWLVRRRG.

At 1-7 (MTAIKHP) the chain is on the cytoplasmic side. The helical transmembrane segment at 8–28 (VLLWGLPVAALIIIFWLSLFC) threads the bilayer. Residues 29 to 64 (YSAIPVSGADATRALLPGHTPTLPEALVQNLRLPRS) lie on the Periplasmic side of the membrane. A helical membrane pass occupies residues 65–85 (LVAVLIGASLALAGTLLQTLT). Over 86-100 (HNPMASPSLLGINSG) the chain is Cytoplasmic. The chain crosses the membrane as a helical span at residues 101–121 (AALAMALTSALSPTPIAGYSL). Position 122 (S122) is a topological domain, periplasmic. Residues 123–143 (FIAACGGGVSWLLVMTAGGGF) traverse the membrane as a helical segment. Topologically, residues 144–151 (RHTHDRNK) are cytoplasmic. A helical membrane pass occupies residues 152–172 (LILAGIALSAFCMGLTRITLL). The Periplasmic portion of the chain corresponds to 173–199 (LAEDHAYGIFYWLAGGVSHARWQDVWQ). Residues 200 to 220 (LLPVVVTAVPVVLLLANQLNL) form a helical membrane-spanning segment. Residues 221 to 244 (LNLSDSTAHTLGVNLTRLRLVINM) are Cytoplasmic-facing. A helical transmembrane segment spans residues 245–265 (LVLLLVGACVSVAGPVAFIGL). Over 266–307 (LVPHLARFWAGFDQRNVLPVSMLLGATLMLLADVLARALAFP) the chain is Periplasmic. A helical membrane pass occupies residues 308–328 (GDLPAGAVLALIGSPCFVWLV). The Cytoplasmic segment spans residues 329–332 (RRRG).

This sequence belongs to the binding-protein-dependent transport system permease family. FecCD subfamily. In terms of assembly, the complex is composed of two ATP-binding proteins (FecE), two transmembrane proteins (FecC and FecD) and a solute-binding protein (FecB). Interacts with FecB.

The protein localises to the cell inner membrane. Functionally, part of the ABC transporter complex FecBCDE involved in citrate-dependent Fe(3+) uptake. Probably responsible for the translocation of the substrate across the membrane. This Escherichia coli (strain K12) protein is Fe(3+) dicitrate transport system permease protein FecC.